The following is a 384-amino-acid chain: S-adenosylmethionine synthase (384 aa).

His-15 provides a ligand contact to ATP. Residue Asp-17 participates in Mg(2+) binding. Glu-43 serves as a coordination point for K(+). L-methionine contacts are provided by Glu-56 and Gln-99. Positions 99–109 (QSPDINQGVDK) are flexible loop. ATP-binding positions include 164–166 (DAK), 230–231 (RF), Asp-239, 245–246 (RK), Ala-262, and Lys-266. An L-methionine-binding site is contributed by Asp-239. Lys-270 provides a ligand contact to L-methionine.

This sequence belongs to the AdoMet synthase family. In terms of assembly, homotetramer; dimer of dimers. Mg(2+) serves as cofactor. K(+) is required as a cofactor.

The protein resides in the cytoplasm. The enzyme catalyses L-methionine + ATP + H2O = S-adenosyl-L-methionine + phosphate + diphosphate. It participates in amino-acid biosynthesis; S-adenosyl-L-methionine biosynthesis; S-adenosyl-L-methionine from L-methionine: step 1/1. Functionally, catalyzes the formation of S-adenosylmethionine (AdoMet) from methionine and ATP. The overall synthetic reaction is composed of two sequential steps, AdoMet formation and the subsequent tripolyphosphate hydrolysis which occurs prior to release of AdoMet from the enzyme. The chain is S-adenosylmethionine synthase from Vibrio vulnificus (strain YJ016).